Reading from the N-terminus, the 89-residue chain is MALTAEQKKEILRSYGLHETDTGSPEAQIALLTKRIADLTEHLKVHKHDHHSRRGLLLLVGRRRRLIKYISQIDVERYRSLIERLGLRR.

The protein belongs to the universal ribosomal protein uS15 family. As to quaternary structure, part of the 30S ribosomal subunit. Forms a bridge to the 50S subunit in the 70S ribosome, contacting the 23S rRNA.

Its function is as follows. One of the primary rRNA binding proteins, it binds directly to 16S rRNA where it helps nucleate assembly of the platform of the 30S subunit by binding and bridging several RNA helices of the 16S rRNA. Functionally, forms an intersubunit bridge (bridge B4) with the 23S rRNA of the 50S subunit in the ribosome. The chain is Small ribosomal subunit protein uS15 from Mycobacterium bovis (strain ATCC BAA-935 / AF2122/97).